A 215-amino-acid polypeptide reads, in one-letter code: LexA repressor (215 aa).

The H-T-H motif DNA-binding region spans 28-48 (RAEIAAELGFSSPNAAEEHLR). Catalysis depends on for autocatalytic cleavage activity residues S133 and K170.

This sequence belongs to the peptidase S24 family. In terms of assembly, homodimer.

The enzyme catalyses Hydrolysis of Ala-|-Gly bond in repressor LexA.. Represses a number of genes involved in the response to DNA damage (SOS response), including recA and lexA. In the presence of single-stranded DNA, RecA interacts with LexA causing an autocatalytic cleavage which disrupts the DNA-binding part of LexA, leading to derepression of the SOS regulon and eventually DNA repair. The protein is LexA repressor of Burkholderia mallei (strain NCTC 10247).